The following is a 165-amino-acid chain: ATP synthase subunit delta, mitochondrial (165 aa).

Residues 1–27 (MNSLRIARAALRVRPTAVRAPLQRRGY) constitute a mitochondrion transit peptide.

This sequence belongs to the ATPase epsilon chain family. As to quaternary structure, F-type ATPases have 2 components, CF(1) - the catalytic core - and CF(0) - the membrane proton channel. CF(1) has five subunits: alpha(3), beta(3), gamma(1), delta(1), epsilon(1). CF(0) has three main subunits: a, b and c.

It is found in the mitochondrion. The protein resides in the mitochondrion inner membrane. In terms of biological role, mitochondrial membrane ATP synthase (F(1)F(0) ATP synthase or Complex V) produces ATP from ADP in the presence of a proton gradient across the membrane which is generated by electron transport complexes of the respiratory chain. F-type ATPases consist of two structural domains, F(1) - containing the extramembraneous catalytic core, and F(0) - containing the membrane proton channel, linked together by a central stalk and a peripheral stalk. During catalysis, ATP turnover in the catalytic domain of F(1) is coupled via a rotary mechanism of the central stalk subunits to proton translocation. Part of the complex F(1) domain and of the central stalk which is part of the complex rotary element. Rotation of the central stalk against the surrounding alpha(3)beta(3) subunits leads to hydrolysis of ATP in three separate catalytic sites on the beta subunits. This is ATP synthase subunit delta, mitochondrial (des) from Neurospora crassa (strain ATCC 24698 / 74-OR23-1A / CBS 708.71 / DSM 1257 / FGSC 987).